The sequence spans 221 residues: Putative adhesin P1-like protein MPN_131 (221 aa).

Low complexity predominate over residues 13–36; sequence RYGNNHRGSNSSTSGVTTQGQSQN. Disordered stretches follow at residues 13–51 and 90–183; these read RYGN…NVGV and GWRN…TPSG. A compositionally biased stretch (polar residues) spans 37–48; the sequence is ASSNEPAPTFSN. The segment covering 130-139 has biased composition (basic and acidic residues); the sequence is LKQDKADKSG. Polar residues-rich tracts occupy residues 149–160 and 174–183; these read SGDNLTNYTNLP and HSPTRTTPSG.

Belongs to the adhesin P1 family.

This Mycoplasma pneumoniae (strain ATCC 29342 / M129 / Subtype 1) (Mycoplasmoides pneumoniae) protein is Putative adhesin P1-like protein MPN_131.